A 338-amino-acid polypeptide reads, in one-letter code: Glycerol-3-phosphate dehydrogenase [NAD(P)+] (338 aa).

Positions 14, 15, 35, and 109 each coordinate NADPH. Residues Lys-109 and Gly-137 each contribute to the sn-glycerol 3-phosphate site. Ala-141 is an NADPH binding site. Positions 192, 247, 257, 258, and 259 each coordinate sn-glycerol 3-phosphate. Lys-192 acts as the Proton acceptor in catalysis. Arg-258 lines the NADPH pocket. Leu-282 and Glu-284 together coordinate NADPH.

Belongs to the NAD-dependent glycerol-3-phosphate dehydrogenase family.

The protein resides in the cytoplasm. It catalyses the reaction sn-glycerol 3-phosphate + NAD(+) = dihydroxyacetone phosphate + NADH + H(+). It carries out the reaction sn-glycerol 3-phosphate + NADP(+) = dihydroxyacetone phosphate + NADPH + H(+). It functions in the pathway membrane lipid metabolism; glycerophospholipid metabolism. Catalyzes the reduction of the glycolytic intermediate dihydroxyacetone phosphate (DHAP) to sn-glycerol 3-phosphate (G3P), the key precursor for phospholipid synthesis. The sequence is that of Glycerol-3-phosphate dehydrogenase [NAD(P)+] from Rickettsia rickettsii (strain Iowa).